The following is a 731-amino-acid chain: Fatty acid oxidation complex subunit alpha (731 aa).

The segment at threonine 15 to proline 204 is enoyl-CoA hydratase. The interval lysine 320–serine 729 is 3-hydroxyacyl-CoA dehydrogenase.

In the N-terminal section; belongs to the enoyl-CoA hydratase/isomerase family. This sequence in the central section; belongs to the 3-hydroxyacyl-CoA dehydrogenase family. As to quaternary structure, heterotetramer of two alpha chains (FadJ) and two beta chains (FadI).

The protein localises to the cytoplasm. The enzyme catalyses a (3S)-3-hydroxyacyl-CoA = a (2E)-enoyl-CoA + H2O. The catalysed reaction is a 4-saturated-(3S)-3-hydroxyacyl-CoA = a (3E)-enoyl-CoA + H2O. It catalyses the reaction a (3S)-3-hydroxyacyl-CoA + NAD(+) = a 3-oxoacyl-CoA + NADH + H(+). It carries out the reaction (3S)-3-hydroxybutanoyl-CoA = (3R)-3-hydroxybutanoyl-CoA. The protein operates within lipid metabolism; fatty acid beta-oxidation. Functionally, catalyzes the formation of a hydroxyacyl-CoA by addition of water on enoyl-CoA. Also exhibits 3-hydroxyacyl-CoA epimerase and 3-hydroxyacyl-CoA dehydrogenase activities. The sequence is that of Fatty acid oxidation complex subunit alpha from Pectobacterium atrosepticum (strain SCRI 1043 / ATCC BAA-672) (Erwinia carotovora subsp. atroseptica).